A 130-amino-acid polypeptide reads, in one-letter code: Holo-[acyl-carrier-protein] synthase (130 aa).

Mg(2+) is bound by residues Asp-8 and Glu-62.

It belongs to the P-Pant transferase superfamily. AcpS family. Mg(2+) is required as a cofactor.

It is found in the cytoplasm. It catalyses the reaction apo-[ACP] + CoA = holo-[ACP] + adenosine 3',5'-bisphosphate + H(+). In terms of biological role, transfers the 4'-phosphopantetheine moiety from coenzyme A to a Ser of acyl-carrier-protein. The sequence is that of Holo-[acyl-carrier-protein] synthase from Polynucleobacter asymbioticus (strain DSM 18221 / CIP 109841 / QLW-P1DMWA-1) (Polynucleobacter necessarius subsp. asymbioticus).